The following is a 179-amino-acid chain: ADP-ribosylation factor-like protein 5A (179 aa).

G2 is lipidated: N-myristoyl glycine. Residues 23-30, 66-70, 125-128, and A159 each bind GTP; these read GLDNAGKT, DIGGQ, and NKQD.

It belongs to the small GTPase superfamily. Arf family. As to expression, low amounts were found in most tissues examined with highest levels in brain, intestine and thymus.

Lacks ADP-ribosylation enhancing activity. The chain is ADP-ribosylation factor-like protein 5A (Arl5a) from Rattus norvegicus (Rat).